Reading from the N-terminus, the 698-residue chain is Polyribonucleotide nucleotidyltransferase (698 aa).

Residues Asp-490 and Asp-496 each coordinate Mg(2+). The KH domain occupies Pro-558–Ile-617. In terms of domain architecture, S1 motif spans Asn-627–Lys-695.

Belongs to the polyribonucleotide nucleotidyltransferase family. Mg(2+) is required as a cofactor.

Its subcellular location is the cytoplasm. The catalysed reaction is RNA(n+1) + phosphate = RNA(n) + a ribonucleoside 5'-diphosphate. Its function is as follows. Involved in mRNA degradation. Catalyzes the phosphorolysis of single-stranded polyribonucleotides processively in the 3'- to 5'-direction. The sequence is that of Polyribonucleotide nucleotidyltransferase from Elusimicrobium minutum (strain Pei191).